The following is a 142-amino-acid chain: E1B protein, small T-antigen (142 aa).

This sequence belongs to the adenoviridae E1B 19 kDa protein family.

It localises to the host cell membrane. Its subcellular location is the host nucleus envelope. The protein resides in the host nucleus lamina. Its function is as follows. Putative adenovirus Bcl-2 homolog that inhibits apoptosis induced by TNF or FAS pathways, as well as p53-mediated apoptosis. Without E1B 19K function, virus production is compromised because of premature death of host cell. Interacts with Bax protein in cell lysates. In Homo sapiens (Human), this protein is E1B protein, small T-antigen.